Here is a 1072-residue protein sequence, read N- to C-terminus: PWWP domain-containing protein 1 (1072 aa).

Residues 21 to 133 (DSIQDPKVTP…ADEKELDLGL (113 aa)) form a disordered region. The segment covering 25-38 (DPKVTPDDTVVDSS) has biased composition (low complexity). Residues 66–77 (RVLESERSEKDG) show a composition bias toward basic and acidic residues. Acidic residues predominate over residues 96–128 (KDDESSEVKEEEEEEDGSDDQSSELGSEADEKE). The PWWP domain occupies 173–234 (VGDLVWGKVK…PAELIPFEPN (62 aa)). The interval 365 to 387 (KSPRSSVSTLEPHNRAPPRAPLS) is disordered. Residues 366–375 (SPRSSVSTLE) show a composition bias toward polar residues. Residues 402–409 (SKKPTKVK) carry the Nuclear localization signal 1 motif. 4 disordered regions span residues 486 to 619 (AIPG…GEAG), 681 to 738 (LSVS…KTNQ), 871 to 931 (KAEP…NGNR), and 944 to 973 (ENSS…SSSV). A compositionally biased stretch (basic and acidic residues) spans 498–526 (SLDEEKGLAEKSKERMEERAAVLPEHGKS). Positions 545 to 568 (AGSSLQPLLESHTSASEGKSSTGS) are enriched in polar residues. 3 consecutive short sequence motifs (nuclear localization signal) follow at residues 596 to 603 (KKKKKEPD), 705 to 712 (VKRTEDPS), and 733 to 740 (LKKTNQLK). Residues 706 to 729 (KRTEDPSKAGKKRLSSDRQDEIPS) show a composition bias toward basic and acidic residues. Basic and acidic residues predominate over residues 871–880 (KAEPREPENT). Residues 897 to 906 (LHQPTLPPPN) show a composition bias toward pro residues. The span at 921–930 (SSSSNNGNGN) shows a compositional bias: low complexity. The segment covering 947-966 (SKANTEPPQVTMTLNRNSGP) has biased composition (polar residues).

It belongs to the PDP family. Interacts with MSI4/FVE. Component of the PRC2 (polycomb repressive complex 2) complex which regulates histone methylation on histone H3K27.

Its subcellular location is the nucleus. Together with PDP2, PDP3 and PDP6, interacts with MSI4/FVE and MSI5 to suppress FLC, MAF4 and MAF5 expression by regulating the function of the PRC2 complex and modulating H3K27me3 level, thereby promoting flowering. The sequence is that of PWWP domain-containing protein 1 from Arabidopsis thaliana (Mouse-ear cress).